A 143-amino-acid polypeptide reads, in one-letter code: Transcriptional regulator MraZ (143 aa).

2 consecutive SpoVT-AbrB domains span residues 5–47 (EYHH…SMEE) and 76–119 (AMES…AKER).

Belongs to the MraZ family. In terms of assembly, forms oligomers.

The protein resides in the cytoplasm. The protein localises to the nucleoid. The protein is Transcriptional regulator MraZ of Lactobacillus helveticus (strain DPC 4571).